Here is a 512-residue protein sequence, read N- to C-terminus: Histidine ammonia-lyase (512 aa).

The 5-imidazolinone (Ala-Gly) cross-link spans 146-148 (ASG). Ser-147 carries the 2,3-didehydroalanine (Ser) modification.

This sequence belongs to the PAL/histidase family. In terms of processing, contains an active site 4-methylidene-imidazol-5-one (MIO), which is formed autocatalytically by cyclization and dehydration of residues Ala-Ser-Gly.

Its subcellular location is the cytoplasm. It catalyses the reaction L-histidine = trans-urocanate + NH4(+). It participates in amino-acid degradation; L-histidine degradation into L-glutamate; N-formimidoyl-L-glutamate from L-histidine: step 1/3. The chain is Histidine ammonia-lyase from Paracidovorax citrulli (strain AAC00-1) (Acidovorax citrulli).